The sequence spans 359 residues: DNA replication and repair protein RecF (359 aa).

An ATP-binding site is contributed by 30-37; sequence GPNGSGKT.

Belongs to the RecF family.

It is found in the cytoplasm. The RecF protein is involved in DNA metabolism; it is required for DNA replication and normal SOS inducibility. RecF binds preferentially to single-stranded, linear DNA. It also seems to bind ATP. In Aliivibrio salmonicida (strain LFI1238) (Vibrio salmonicida (strain LFI1238)), this protein is DNA replication and repair protein RecF.